The primary structure comprises 232 residues: Protein FAM246A (232 aa).

Disordered regions lie at residues 1–47 (MATP…RAPG), 153–178 (LPPP…RGPT), and 191–232 (AASR…GGGD). A compositionally biased stretch (basic and acidic residues) spans 19–31 (EVLRRVTGRRRDP). Positions 211 to 220 (APVRKNHKKM) are enriched in basic residues.

This sequence belongs to the FAM246 family.

In Homo sapiens (Human), this protein is Protein FAM246A.